The chain runs to 804 residues: Leucine--tRNA ligase (804 aa).

Positions 39-50 (PFPSGKGLHVGH) match the 'HIGH' region motif. Positions 573–577 (KMSKS) match the 'KMSKS' region motif. Residue lysine 576 coordinates ATP.

Belongs to the class-I aminoacyl-tRNA synthetase family.

Its subcellular location is the cytoplasm. It carries out the reaction tRNA(Leu) + L-leucine + ATP = L-leucyl-tRNA(Leu) + AMP + diphosphate. This is Leucine--tRNA ligase from Lactobacillus acidophilus (strain ATCC 700396 / NCK56 / N2 / NCFM).